Here is a 643-residue protein sequence, read N- to C-terminus: Phosphomethylpyrimidine synthase (643 aa).

Residues Asn248, Met277, Tyr306, His342, 362-364 (SRG), 403-406 (DGLR), and Glu442 each bind substrate. Zn(2+) is bound at residue His446. Residue Tyr469 coordinates substrate. His510 serves as a coordination point for Zn(2+). Cys590, Cys593, and Cys598 together coordinate [4Fe-4S] cluster.

It belongs to the ThiC family. Homodimer. The cofactor is [4Fe-4S] cluster.

It carries out the reaction 5-amino-1-(5-phospho-beta-D-ribosyl)imidazole + S-adenosyl-L-methionine = 4-amino-2-methyl-5-(phosphooxymethyl)pyrimidine + CO + 5'-deoxyadenosine + formate + L-methionine + 3 H(+). It functions in the pathway cofactor biosynthesis; thiamine diphosphate biosynthesis. Catalyzes the synthesis of the hydroxymethylpyrimidine phosphate (HMP-P) moiety of thiamine from aminoimidazole ribotide (AIR) in a radical S-adenosyl-L-methionine (SAM)-dependent reaction. The polypeptide is Phosphomethylpyrimidine synthase (Burkholderia cenocepacia (strain HI2424)).